Here is a 269-residue protein sequence, read N- to C-terminus: Seven in absentia homolog 3 (269 aa).

The SIAH-type; degenerate zinc-finger motif lies at 61-132 (GSFHPHHLSH…VVPHLRQIHR (72 aa)). Zn(2+) is bound by residues C107, C114, H126, and H131.

It belongs to the SINA (Seven in absentia) family.

It localises to the mitochondrion. In terms of biological role, negative regulator of PRKN translocation to damaged mitochondria. Acts probably by destabilizing PINK1 protein, hence inhibiting PRKN targeting to dysfunctional depolarized mitochondria. This is Seven in absentia homolog 3 (SIAH3) from Homo sapiens (Human).